We begin with the raw amino-acid sequence, 197 residues long: Imidazoleglycerol-phosphate dehydratase (197 aa).

The protein belongs to the imidazoleglycerol-phosphate dehydratase family.

Its subcellular location is the cytoplasm. It carries out the reaction D-erythro-1-(imidazol-4-yl)glycerol 3-phosphate = 3-(imidazol-4-yl)-2-oxopropyl phosphate + H2O. It functions in the pathway amino-acid biosynthesis; L-histidine biosynthesis; L-histidine from 5-phospho-alpha-D-ribose 1-diphosphate: step 6/9. This Clostridium acetobutylicum (strain ATCC 824 / DSM 792 / JCM 1419 / IAM 19013 / LMG 5710 / NBRC 13948 / NRRL B-527 / VKM B-1787 / 2291 / W) protein is Imidazoleglycerol-phosphate dehydratase.